The primary structure comprises 178 residues: Large ribosomal subunit protein uL6 (178 aa).

This sequence belongs to the universal ribosomal protein uL6 family. Part of the 50S ribosomal subunit.

In terms of biological role, this protein binds to the 23S rRNA, and is important in its secondary structure. It is located near the subunit interface in the base of the L7/L12 stalk, and near the tRNA binding site of the peptidyltransferase center. The sequence is that of Large ribosomal subunit protein uL6 from Helicobacter pylori (strain HPAG1).